Consider the following 122-residue polypeptide: Large ribosomal subunit protein uL14 (122 aa).

Belongs to the universal ribosomal protein uL14 family. In terms of assembly, part of the 50S ribosomal subunit. Forms a cluster with proteins L3 and L19. In the 70S ribosome, L14 and L19 interact and together make contacts with the 16S rRNA in bridges B5 and B8.

Its function is as follows. Binds to 23S rRNA. Forms part of two intersubunit bridges in the 70S ribosome. The polypeptide is Large ribosomal subunit protein uL14 (Corynebacterium kroppenstedtii (strain DSM 44385 / JCM 11950 / CIP 105744 / CCUG 35717)).